Reading from the N-terminus, the 264-residue chain is MHQYHDLLERILSDGAEKHDRTGTGTLSVFGHQMRFNLGAGFPLVTTKRLPLKAIVHELLWFLRGDTNIKYLHDHGVTIWDEWADANGDLGPVYGYQWRSWPTPDGGHIDQIANVIDMIKRNPDSRRLIVTAWNPADVEKMALPPCHCLFQFYVVNGKLSCQLYQRSADVFLGVPFNIASYALLTMMVAQVTGLKPGEFVHSFGDVHLYSNHVEQARLQLTRAPRSLPTMTLNPDVKDIFAFRYEDFALAGYDPHPHIKAEVAV.

Residues R21 and R126–R127 contribute to the dUMP site. The active-site Nucleophile is the C146. DUMP contacts are provided by residues R166–D169, N177, and H207–Y209. (6R)-5,10-methylene-5,6,7,8-tetrahydrofolate is bound at residue D169. A263 is a binding site for (6R)-5,10-methylene-5,6,7,8-tetrahydrofolate.

The protein belongs to the thymidylate synthase family. Bacterial-type ThyA subfamily. In terms of assembly, homodimer.

The protein localises to the cytoplasm. The enzyme catalyses dUMP + (6R)-5,10-methylene-5,6,7,8-tetrahydrofolate = 7,8-dihydrofolate + dTMP. The protein operates within pyrimidine metabolism; dTTP biosynthesis. Catalyzes the reductive methylation of 2'-deoxyuridine-5'-monophosphate (dUMP) to 2'-deoxythymidine-5'-monophosphate (dTMP) while utilizing 5,10-methylenetetrahydrofolate (mTHF) as the methyl donor and reductant in the reaction, yielding dihydrofolate (DHF) as a by-product. This enzymatic reaction provides an intracellular de novo source of dTMP, an essential precursor for DNA biosynthesis. The chain is Thymidylate synthase from Bradyrhizobium sp. (strain BTAi1 / ATCC BAA-1182).